The chain runs to 308 residues: UDP-N-acetylenolpyruvoylglucosamine reductase (308 aa).

Positions 32–196 (VGGPAARLYK…ISAKLQLSPG (165 aa)) constitute an FAD-binding PCMH-type domain. Arg176 is a catalytic residue. Ser225 functions as the Proton donor in the catalytic mechanism. Glu296 is an active-site residue.

This sequence belongs to the MurB family. Requires FAD as cofactor.

It is found in the cytoplasm. The catalysed reaction is UDP-N-acetyl-alpha-D-muramate + NADP(+) = UDP-N-acetyl-3-O-(1-carboxyvinyl)-alpha-D-glucosamine + NADPH + H(+). It functions in the pathway cell wall biogenesis; peptidoglycan biosynthesis. In terms of biological role, cell wall formation. This chain is UDP-N-acetylenolpyruvoylglucosamine reductase, found in Legionella pneumophila subsp. pneumophila (strain Philadelphia 1 / ATCC 33152 / DSM 7513).